Here is a 138-residue protein sequence, read N- to C-terminus: Large-conductance mechanosensitive channel (138 aa).

The next 2 helical transmembrane spans lie at 19–39 (VGVIIGAAFGAIVTSLVGDVI) and 81–101 (GSFLTLTINFIIIAFVLFLVI).

Belongs to the MscL family. Homopentamer.

It localises to the cell inner membrane. Functionally, channel that opens in response to stretch forces in the membrane lipid bilayer. May participate in the regulation of osmotic pressure changes within the cell. This Bradyrhizobium diazoefficiens (strain JCM 10833 / BCRC 13528 / IAM 13628 / NBRC 14792 / USDA 110) protein is Large-conductance mechanosensitive channel.